The chain runs to 817 residues: Leucine--tRNA ligase (817 aa).

Residues 42-52 (PYPSGKLHMGH) carry the 'HIGH' region motif. Residues 576-580 (KMSKS) carry the 'KMSKS' region motif. Lysine 579 is an ATP binding site.

The protein belongs to the class-I aminoacyl-tRNA synthetase family.

Its subcellular location is the cytoplasm. It carries out the reaction tRNA(Leu) + L-leucine + ATP = L-leucyl-tRNA(Leu) + AMP + diphosphate. This is Leucine--tRNA ligase from Methylobacillus flagellatus (strain ATCC 51484 / DSM 6875 / VKM B-1610 / KT).